The following is a 508-amino-acid chain: Small ribosomal subunit protein mS47 (508 aa).

The protein belongs to the enoyl-CoA hydratase/isomerase family. Mitochondrion-specific ribosomal protein mS47 subfamily. Component of the mitochondrial small ribosomal subunit (mt-SSU). Mature N.crassa 74S mitochondrial ribosomes consist of a small (37S) and a large (54S) subunit. The 37S small subunit contains a 16S ribosomal RNA (16S mt-rRNA) and 32 different proteins. The 54S large subunit contains a 23S rRNA (23S mt-rRNA) and 42 different proteins. mS47 forms a protuberance of the N.crassa mitoribosome and retains a solvent-exposed cavity liekly capable of accommodating a substrate, in accordance with it being an active enzyme as well as an integral constituent of the mitoribosome.

The protein resides in the mitochondrion. The enzyme catalyses 3-hydroxy-2-methylpropanoyl-CoA + H2O = 3-hydroxy-2-methylpropanoate + CoA + H(+). Its function is as follows. Component of the mitochondrial ribosome (mitoribosome), a dedicated translation machinery responsible for the synthesis of mitochondrial genome-encoded proteins, including at least some of the essential transmembrane subunits of the mitochondrial respiratory chain. The mitoribosomes are attached to the mitochondrial inner membrane and translation products are cotranslationally integrated into the membrane. mS47 has enzymatic activity in vitro, and is able to catalyze the specific hydrolysis of 3-hydroxyisobutyryl-CoA (HIBYL-CoA). However, because the turnover rate of mS47 is only a fraction of that of the homologous mammalian enzyme, the physiological function of this activity remains unclear. This chain is Small ribosomal subunit protein mS47 (ehd3), found in Neurospora crassa (strain ATCC 24698 / 74-OR23-1A / CBS 708.71 / DSM 1257 / FGSC 987).